The primary structure comprises 498 residues: Histidine--tRNA ligase (498 aa).

It belongs to the class-II aminoacyl-tRNA synthetase family. As to quaternary structure, homodimer.

It is found in the cytoplasm. The enzyme catalyses tRNA(His) + L-histidine + ATP = L-histidyl-tRNA(His) + AMP + diphosphate + H(+). The polypeptide is Histidine--tRNA ligase (Bartonella quintana (strain Toulouse) (Rochalimaea quintana)).